The sequence spans 141 residues: Large ribosomal subunit protein uL16 (141 aa).

The protein belongs to the universal ribosomal protein uL16 family. Part of the 50S ribosomal subunit.

Its function is as follows. Binds 23S rRNA and is also seen to make contacts with the A and possibly P site tRNAs. The polypeptide is Large ribosomal subunit protein uL16 (Campylobacter concisus (strain 13826)).